The chain runs to 224 residues: uncharacterized protein (224 aa).

A run of 4 helical transmembrane segments spans residues 25-45, 56-76, 107-127, and 149-169; these read ALAW…IYGI, VFLI…VILP, ELFL…YFFV, and IFVK…VVYF.

The protein localises to the cell membrane. This is an uncharacterized protein from Mycoplasma pneumoniae (strain ATCC 29342 / M129 / Subtype 1) (Mycoplasmoides pneumoniae).